The primary structure comprises 923 residues: Phosphoenolpyruvate carboxylase (923 aa).

Residues H149 and K585 contribute to the active site.

It belongs to the PEPCase type 1 family. Mg(2+) is required as a cofactor.

The catalysed reaction is oxaloacetate + phosphate = phosphoenolpyruvate + hydrogencarbonate. In terms of biological role, forms oxaloacetate, a four-carbon dicarboxylic acid source for the tricarboxylic acid cycle. This is Phosphoenolpyruvate carboxylase from Nocardia farcinica (strain IFM 10152).